We begin with the raw amino-acid sequence, 480 residues long: Probable G-protein coupled receptor Mth-like 6 (480 aa).

An N-terminal signal peptide occupies residues 1 to 20 (MLLNILAIILVFVISSQSEA). At 21-202 (VIPGCDYFDT…LEHVYIPKSM (182 aa)) the chain is on the extracellular side. Cystine bridges form between Cys25/Cys78, Cys80/Cys85, Cys89/Cys179, and Cys90/Cys101. N-linked (GlcNAc...) asparagine glycosylation is present at Asn40. N-linked (GlcNAc...) asparagine glycosylation is found at Asn160 and Asn170. A helical transmembrane segment spans residues 203-225 (PAVPQVGTISMVGCILTIAVYLY). Over 226–231 (IKKLRN) the chain is Cytoplasmic. The helical transmembrane segment at 232–254 (LLGKCFICYVFCKFVQYLIWAGG) threads the bilayer. The Extracellular segment spans residues 255–263 (DLNLWNNIC). Residues 264-283 (SLAGYTNYFFALASHFWLSV) form a helical membrane-spanning segment. Residues 284–303 (MSHQIWKNLRLINRDERSYH) are Cytoplasmic-facing. The chain crosses the membrane as a helical span at residues 304–326 (FLIYNIYGWGTPAIMTAITYLVD). The Extracellular segment spans residues 327–356 (WAWEDRPDKLNWIPGVGLYRCWINTYDWSA). The helical transmembrane segment at 357–379 (MIYLYGPMLILSLFNVVTFILTV) threads the bilayer. Residues 380-405 (NHIMKIKSSVKSSTQQQRKCIQNNDF) lie on the Cytoplasmic side of the membrane. Residues 406 to 428 (LLYLRLSVMMGVTGISEVITYFV) form a helical membrane-spanning segment. Residues 429–437 (KRHKFWRQV) lie on the Extracellular side of the membrane. A helical transmembrane segment spans residues 438 to 457 (LRVPNFFHLGSGIVVFVLFI). The Cytoplasmic portion of the chain corresponds to 458–480 (LKRSTFQMIMERISGPRRQQPAS).

The protein belongs to the G-protein coupled receptor 2 family. Mth subfamily.

It localises to the cell membrane. The chain is Probable G-protein coupled receptor Mth-like 6 (mthl6) from Drosophila melanogaster (Fruit fly).